We begin with the raw amino-acid sequence, 318 residues long: tRNA dimethylallyltransferase (318 aa).

28–35 (GPTGAGKS) is a binding site for ATP. 30-35 (TGAGKS) is a binding site for substrate. The segment at 53-56 (DSMQ) is interaction with substrate tRNA.

The protein belongs to the IPP transferase family. As to quaternary structure, monomer. It depends on Mg(2+) as a cofactor.

The catalysed reaction is adenosine(37) in tRNA + dimethylallyl diphosphate = N(6)-dimethylallyladenosine(37) in tRNA + diphosphate. Functionally, catalyzes the transfer of a dimethylallyl group onto the adenine at position 37 in tRNAs that read codons beginning with uridine, leading to the formation of N6-(dimethylallyl)adenosine (i(6)A). The sequence is that of tRNA dimethylallyltransferase from Parafrankia sp. (strain EAN1pec).